A 527-amino-acid chain; its full sequence is Succinate-semialdehyde dehydrogenase, mitochondrial (527 aa).

The N-terminal 35 residues, methionine 1–methionine 35, are a transit peptide targeting the mitochondrion. Residues arginine 208, lysine 223–glutamate 226, and glycine 276–glycine 281 contribute to the NAD(+) site. A substrate-binding site is contributed by arginine 208. The active-site Proton acceptor is the glutamate 298. 3 residues coordinate substrate: arginine 326, cysteine 332, and serine 489. Cysteine 332 functions as the Nucleophile in the catalytic mechanism. Cysteines 332 and 334 form a disulfide.

The protein belongs to the aldehyde dehydrogenase family. Homotetramer.

It is found in the mitochondrion matrix. It carries out the reaction succinate semialdehyde + NAD(+) + H2O = succinate + NADH + 2 H(+). It functions in the pathway amino-acid degradation; 4-aminobutanoate degradation. Its activity is regulated as follows. Redox-regulated. Inhibited under oxydizing conditions. Oxidizes specifically succinate semialdehyde. Involved in plant response to environmental stress by preventing the accumulation of reactive oxygen species. The protein is Succinate-semialdehyde dehydrogenase, mitochondrial (ALDH5F1) of Oryza sativa subsp. japonica (Rice).